Here is a 258-residue protein sequence, read N- to C-terminus: Imidazole glycerol phosphate synthase subunit HisF (258 aa).

Residues Asp-11 and Asp-130 contribute to the active site.

The protein belongs to the HisA/HisF family. As to quaternary structure, heterodimer of HisH and HisF.

Its subcellular location is the cytoplasm. It carries out the reaction 5-[(5-phospho-1-deoxy-D-ribulos-1-ylimino)methylamino]-1-(5-phospho-beta-D-ribosyl)imidazole-4-carboxamide + L-glutamine = D-erythro-1-(imidazol-4-yl)glycerol 3-phosphate + 5-amino-1-(5-phospho-beta-D-ribosyl)imidazole-4-carboxamide + L-glutamate + H(+). It participates in amino-acid biosynthesis; L-histidine biosynthesis; L-histidine from 5-phospho-alpha-D-ribose 1-diphosphate: step 5/9. Functionally, IGPS catalyzes the conversion of PRFAR and glutamine to IGP, AICAR and glutamate. The HisF subunit catalyzes the cyclization activity that produces IGP and AICAR from PRFAR using the ammonia provided by the HisH subunit. This Methylobacterium nodulans (strain LMG 21967 / CNCM I-2342 / ORS 2060) protein is Imidazole glycerol phosphate synthase subunit HisF.